The chain runs to 180 residues: NAD(P)H-quinone oxidoreductase subunit I, chloroplastic (180 aa).

4Fe-4S ferredoxin-type domains follow at residues 55–84 (GRIH…VDWR) and 95–124 (LNYS…MTEE). Residues cysteine 64, cysteine 67, cysteine 70, cysteine 74, cysteine 104, cysteine 107, cysteine 110, and cysteine 114 each coordinate [4Fe-4S] cluster.

It belongs to the complex I 23 kDa subunit family. As to quaternary structure, NDH is composed of at least 16 different subunits, 5 of which are encoded in the nucleus. It depends on [4Fe-4S] cluster as a cofactor.

It localises to the plastid. It is found in the chloroplast thylakoid membrane. It carries out the reaction a plastoquinone + NADH + (n+1) H(+)(in) = a plastoquinol + NAD(+) + n H(+)(out). The enzyme catalyses a plastoquinone + NADPH + (n+1) H(+)(in) = a plastoquinol + NADP(+) + n H(+)(out). NDH shuttles electrons from NAD(P)H:plastoquinone, via FMN and iron-sulfur (Fe-S) centers, to quinones in the photosynthetic chain and possibly in a chloroplast respiratory chain. The immediate electron acceptor for the enzyme in this species is believed to be plastoquinone. Couples the redox reaction to proton translocation, and thus conserves the redox energy in a proton gradient. The sequence is that of NAD(P)H-quinone oxidoreductase subunit I, chloroplastic from Agrostis stolonifera (Creeping bentgrass).